A 3461-amino-acid polypeptide reads, in one-letter code: Reelin (3461 aa).

The first 26 residues, 1 to 26 (MERGCWAPRALVLAVLLLLATLRARA), serve as a signal peptide directing secretion. Residues 27–191 (ATGYYPRFSP…GAPTEATAYS (165 aa)) form the Reelin domain. Cysteines 41 and 127 form a disulfide. N-linked (GlcNAc...) asparagine glycosylation is present at Asn-141. The cysteines at positions 155 and 179 are disulfide-linked. N-linked (GlcNAc...) asparagine glycans are attached at residues Asn-258, Asn-290, and Asn-306. Cys-540 and Cys-581 are disulfide-bonded. The BNR 1 repeat unit spans residues 593-604 (EFSTNHGRSWSL). A disulfide bond links Cys-609 and Cys-614. The N-linked (GlcNAc...) asparagine glycan is linked to Asn-629. Positions 671 to 702 (IGPSCLKFCSGRGQCTRHGCKCDPGFSGPACE) constitute an EGF-like 1 domain. Intrachain disulfides connect Cys-675-Cys-685 and Cys-692-Cys-701. A BNR 2 repeat occupies 799–810 (HYSYDNGITWKL). A disulfide bridge connects residues Cys-895 and Cys-937. The BNR 3 repeat unit spans residues 952 to 963 (EYSANHGLTWHL). 3 cysteine pairs are disulfide-bonded: Cys-968-Cys-975, Cys-1034-Cys-1044, and Cys-1051-Cys-1060. In terms of domain architecture, EGF-like 2 spans 1030-1061 (IGQQCPNMCSGHGSCDHGVCRCDQGYQGTECH). A BNR 4 repeat occupies 1157–1168 (QYSNNGGIQWHL). Asn-1267 is a glycosylation site (N-linked (GlcNAc...) asparagine). Residues 1323–1334 (QYSHDAGMSWFL) form a BNR 5 repeat. Cystine bridges form between Cys-1339/Cys-1348, Cys-1413/Cys-1423, Cys-1417/Cys-1428, and Cys-1430/Cys-1441. The EGF-like 3 domain occupies 1409 to 1442 (ISEPCPSYCSGHGDCISGVCFCDLGYTAAQGTCV). A glycan (N-linked (GlcNAc...) asparagine) is linked at Asn-1447. Residues Cys-1475 and Cys-1522 are joined by a disulfide bond. The BNR 6 repeat unit spans residues 1535 to 1546 (QYSNDNGILWHL). Asn-1600 is a glycosylation site (N-linked (GlcNAc...) asparagine). The cysteines at positions 1633 and 1673 are disulfide-linked. Residues 1686 to 1697 (QYSLNNGKDWQL) form a BNR 7 repeat. Cys-1702 and Cys-1709 are oxidised to a cystine. Asn-1750 carries an N-linked (GlcNAc...) asparagine glycan. An EGF-like 4 domain is found at 1765–1796 (LASGCPWMCSGRGICDSGRCVCDRGFGGPFCV). Residues 1884-1895 (QFSVSGGVTWHL) form a BNR 8 repeat. The N-linked (GlcNAc...) asparagine glycan is linked to Asn-1921. Cys-1983 and Cys-2030 are joined by a disulfide. One copy of the BNR 9 repeat lies at 2043 to 2054 (EFSRDFGATWHL). Cysteines 2059 and 2070 form a disulfide. Residues His-2061 and His-2074 each contribute to the Zn(2+) site. In terms of domain architecture, EGF-like 5 spans 2129–2161 (IGPQCEEMCYGHGSCINGTKCICDPGYSGPTCK). Cystine bridges form between Cys-2133–Cys-2143, Cys-2137–Cys-2149, and Cys-2151–Cys-2160. The N-linked (GlcNAc...) asparagine glycan is linked to Asn-2145. Residue Glu-2179 participates in Zn(2+) binding. The cysteines at positions 2195 and 2235 are disulfide-linked. Residues 2250–2261 (QYSLNGGLSWSL) form a BNR 10 repeat. Residue Glu-2264 participates in Zn(2+) binding. N-linked (GlcNAc...) asparagine glycosylation is found at Asn-2269 and Asn-2317. 6 disulfide bridges follow: Cys-2348-Cys-2387, Cys-2393-Cys-2559, Cys-2482-Cys-2492, Cys-2486-Cys-2497, Cys-2499-Cys-2508, and Cys-2544-Cys-2584. Zn(2+)-binding residues include Glu-2397, Glu-2399, and His-2460. A BNR 11 repeat occupies 2399 to 2410 (EYSVDLGLSWHP). The region spanning 2478 to 2509 (IGDGCLDMCSGHGRCVQGSCVCDEQWGGLYCD) is the EGF-like 6 domain. The N-linked (GlcNAc...) asparagine glycan is linked to Asn-2569. BNR repeat units follow at residues 2598–2609 (EYSVNGGITWNL) and 2778–2789 (QFSTDFGVSWSY). Cysteines 2794 and 2801 form a disulfide. Residues 2853 to 2884 (LGPGCLDNCGGHGDCLKEQCICDPGYSGPNCY) form the EGF-like 7 domain. The cysteines at positions 2919 and 2966 are disulfide-linked. A glycan (N-linked (GlcNAc...) asparagine) is linked at Asn-2962. Residues 2979 to 2990 (DFSTDGGITWTL) form a BNR 14 repeat. N-linked (GlcNAc...) asparagine glycosylation is found at Asn-3016 and Asn-3073. Residues 3143 to 3155 (EYTKDARSDSWQL) form a BNR 15 repeat. Cys-3160 and Cys-3170 form a disulfide bridge. N-linked (GlcNAc...) asparagine glycosylation is present at Asn-3185. The 33-residue stretch at 3228-3260 (IGEACPKLCSGHGYCTTGAVCICDESFQGDDCS) folds into the EGF-like 8 domain. Cystine bridges form between Cys-3232/Cys-3242, Cys-3236/Cys-3248, Cys-3250/Cys-3259, and Cys-3296/Cys-3346. One copy of the BNR 16 repeat lies at 3363 to 3374 (QYSVNNGITWHV). N-linked (GlcNAc...) asparagine glycosylation is found at Asn-3412 and Asn-3439.

This sequence belongs to the reelin family. As to quaternary structure, oligomer of disulfide-linked homodimers. Post-translationally, N-glycosylated and to a lesser extent also O-glycosylated. In terms of tissue distribution, the major isoform 1 is neuron-specific. It is abundantly produced during brain ontogenesis by the Cajal-Retzius cells and other pioneer neurons located in the telencephalic marginal zone and by granule cells of the external granular layer of the cerebellum. Expression is located in deeper layers in the developing hippocampus and olfactory bulb, low levels of expression are also detected in the immature striatum. At early developmental stages, expressed also in hypothalamic differentiation fields, tectum and spinal cord. A moderate to low level of expression occurs in the septal area, striatal fields, habenular nuclei, some thalamic nuclei, particularly the lateral geniculate, the retina and some nuclei of the reticular formation in the central field of the medulla. Very low levels found in liver and kidney. No expression in radial glial cells, cortical plate, Purkinje cells and inferior olivary neurons. The minor isoform 2 is only expressed in non neuronal cells. The minor isoform 3 is found in the same cells as isoform 1, but is almost undetectable in retina and brain stem.

The protein localises to the secreted. The protein resides in the extracellular space. Its subcellular location is the extracellular matrix. Extracellular matrix serine protease secreted by pioneer neurons that plays a role in layering of neurons in the cerebral cortex and cerebellum by coordinating cell positioning during neurodevelopment. Regulates microtubule function in neurons and neuronal migration. Binding to the extracellular domains of lipoprotein receptors VLDLR and LRP8/APOER2 induces tyrosine phosphorylation of DAB1 and modulation of TAU phosphorylation. Affects migration of sympathetic preganglionic neurons in the spinal cord, where it seems to act as a barrier to neuronal migration. Enzymatic activity is important for the modulation of cell adhesion. This chain is Reelin (Reln), found in Mus musculus (Mouse).